A 529-amino-acid polypeptide reads, in one-letter code: Peptide chain release factor 3 (529 aa).

Positions 11–280 constitute a tr-type G domain; the sequence is ARRRTFAIIS…GLVEWAPSPM (270 aa). GTP contacts are provided by residues 20–27, 88–92, and 142–145; these read SHPDAGKT, DTPGH, and NKLD.

It belongs to the TRAFAC class translation factor GTPase superfamily. Classic translation factor GTPase family. PrfC subfamily.

The protein resides in the cytoplasm. Increases the formation of ribosomal termination complexes and stimulates activities of RF-1 and RF-2. It binds guanine nucleotides and has strong preference for UGA stop codons. It may interact directly with the ribosome. The stimulation of RF-1 and RF-2 is significantly reduced by GTP and GDP, but not by GMP. The sequence is that of Peptide chain release factor 3 from Erwinia tasmaniensis (strain DSM 17950 / CFBP 7177 / CIP 109463 / NCPPB 4357 / Et1/99).